The following is a 221-amino-acid chain: Translation initiation factor 6 (221 aa).

Belongs to the eIF-6 family.

In terms of biological role, binds to the 50S ribosomal subunit and prevents its association with the 30S ribosomal subunit to form the 70S initiation complex. This Methanosphaerula palustris (strain ATCC BAA-1556 / DSM 19958 / E1-9c) protein is Translation initiation factor 6.